A 336-amino-acid chain; its full sequence is Inositol 2-dehydrogenase (336 aa).

It belongs to the Gfo/Idh/MocA family. Homotetramer.

The catalysed reaction is myo-inositol + NAD(+) = scyllo-inosose + NADH + H(+). Functionally, involved in the oxidation of myo-inositol (MI) to 2-keto-myo-inositol (2KMI or 2-inosose). The sequence is that of Inositol 2-dehydrogenase from Salmonella agona (strain SL483).